The following is a 955-amino-acid chain: Villin-5 (955 aa).

Gelsolin-like repeat units follow at residues 29 to 111 (FKPV…DKFL), 152 to 218 (VHVK…VEDG), 274 to 339 (LLHE…TVMF), and 644 to 712 (HFTQ…GSEP). Disordered regions lie at residues 741-783 (KGGG…RVRV) and 801-895 (NSRN…GLPV). Over residues 756 to 776 (PTYSGRSTVQDKSQRSRSMSF) the composition is skewed to polar residues. The span at 817-836 (PKSATPDSSSAPSKSSATAS) shows a compositional bias: low complexity. The segment covering 842-864 (DRPKSVKDGSELEKPKQEEDAKE) has biased composition (basic and acidic residues). Residues 867-878 (NTMTSRVESLTI) show a composition bias toward polar residues. One can recognise an HP domain in the interval 890–955 (DEGLPVYPYD…NRMKIALQLF (66 aa)).

The protein belongs to the villin/gelsolin family.

The protein resides in the cytoplasm. The protein localises to the cytoskeleton. In terms of biological role, ca(2+)-regulated actin-binding protein. Binds actin microfilaments (MFs). Involved in actin filament bundling, severing and capping. Caps the barbed end of actin filaments and is able to sever them in a calcium-dependent manner. This chain is Villin-5, found in Oryza sativa subsp. japonica (Rice).